Consider the following 430-residue polypeptide: Adenylosuccinate synthetase (430 aa).

GTP is bound by residues 12 to 18 (GDEGKGK) and 40 to 42 (GHT). Asp13 (proton acceptor) is an active-site residue. Mg(2+)-binding residues include Asp13 and Gly40. IMP is bound by residues 13–16 (DEGK), 38–41 (NAGH), Thr128, Arg142, Gln223, Thr238, and Arg302. Residue His41 is the Proton donor of the active site. Position 298 to 304 (298 to 304 (TTTGRPR)) interacts with substrate. Residues Arg304, 330 to 332 (SID), and 412 to 414 (SVG) each bind GTP.

This sequence belongs to the adenylosuccinate synthetase family. In terms of assembly, homodimer. Mg(2+) is required as a cofactor.

It localises to the cytoplasm. It carries out the reaction IMP + L-aspartate + GTP = N(6)-(1,2-dicarboxyethyl)-AMP + GDP + phosphate + 2 H(+). It functions in the pathway purine metabolism; AMP biosynthesis via de novo pathway; AMP from IMP: step 1/2. Functionally, plays an important role in the de novo pathway of purine nucleotide biosynthesis. Catalyzes the first committed step in the biosynthesis of AMP from IMP. The polypeptide is Adenylosuccinate synthetase (Streptococcus pyogenes serotype M2 (strain MGAS10270)).